We begin with the raw amino-acid sequence, 266 residues long: Secreted RxLR effector protein 128 (266 aa).

The N-terminal stretch at 1–18 (MRGAFYTAIALLIGRSQT) is a signal peptide. The RxLR-dEER motif lies at 48–63 (RYLRDGLAHSATNEER).

The protein belongs to the RxLR effector family.

It localises to the secreted. Its subcellular location is the host nucleus. In terms of biological role, secreted effector that dos not suppress the host cell death induced by cell death-inducing proteins. In Plasmopara viticola (Downy mildew of grapevine), this protein is Secreted RxLR effector protein 128.